The primary structure comprises 592 residues: Putative uric acid sigma-54-dependent transcriptional regulator UacR (592 aa).

One can recognise a PAS domain in the interval 158-229 (ISKIFATMID…HMQHIVSWDD (72 aa)). Residues 272–502 (LVGECRVMRQ…LSNLMEYLVN (231 aa)) form the Sigma-54 factor interaction domain. ATP is bound by residues 300–307 (GESGTGKE) and 364–373 (ANTGTLFLDE). The segment at residues 567 to 585 (KQVADELGIGIATLYRKIK) is a DNA-binding region (H-T-H motif).

Its function is as follows. Essential for both formate-dependent and formate-independent uric acid degradation. May be directly involved in the transcription of uacF in response to hypoxanthine, xanthine, and uric acid. The polypeptide is Putative uric acid sigma-54-dependent transcriptional regulator UacR (Escherichia coli (strain K12)).